We begin with the raw amino-acid sequence, 530 residues long: uncharacterized protein (530 aa).

Composition is skewed to polar residues over residues 60–74 and 92–103; these read LNES…SSTP and GQGTSRPLPTLS. Disordered stretches follow at residues 60–103 and 121–155; these read LNES…PTLS and ASST…GLGN. A compositionally biased stretch (basic and acidic residues) spans 131 to 142; sequence PDPRDAPREGSF.

This is an uncharacterized protein from Mus musculus (Mouse).